The chain runs to 594 residues: Grainyhead-like protein 3 homolog (594 aa).

Transcription activation stretches follow at residues 25–75 (NDDE…RIIT) and 28–91 (EAWS…SCIE). Residues 220-453 (ANRDFECTLE…DMETHPVLFI (234 aa)) enclose the Grh/CP2 DB domain. Residues 483–503 (SSQSFPESFEAPPSKQQTNED) form a disordered region.

The protein belongs to the grh/CP2 family. Grainyhead subfamily.

The protein localises to the nucleus. Transcription factor playing important roles in primary neurulation and in the differentiation of stratified epithelia of both ectodermal and endodermal origin. Binds directly to the consensus DNA sequence 5'-AACCGGTT-3' acting as an activator and repressor on distinct target genes. The chain is Grainyhead-like protein 3 homolog (grhl3) from Xenopus tropicalis (Western clawed frog).